The primary structure comprises 235 residues: Ion-translocating oxidoreductase complex subunit E (235 aa).

5 consecutive transmembrane segments (helical) span residues 63-83, 93-113, 117-137, 152-172, and 206-226; these read LGLG…ISLF, IPIY…LMNA, TLYQ…IIIG, IWDG…LGAL, and SFLL…LLAI.

The protein belongs to the NqrDE/RnfAE family. As to quaternary structure, the complex is composed of six subunits: RnfA, RnfB, RnfC, RnfD, RnfE and RnfG.

It localises to the cell inner membrane. Functionally, part of a membrane-bound complex that couples electron transfer with translocation of ions across the membrane. This Haemophilus influenzae (strain 86-028NP) protein is Ion-translocating oxidoreductase complex subunit E.